Here is a 95-residue protein sequence, read N- to C-terminus: Co-chaperonin GroES (95 aa).

The protein belongs to the GroES chaperonin family. Heptamer of 7 subunits arranged in a ring. Interacts with the chaperonin GroEL.

It is found in the cytoplasm. Functionally, together with the chaperonin GroEL, plays an essential role in assisting protein folding. The GroEL-GroES system forms a nano-cage that allows encapsulation of the non-native substrate proteins and provides a physical environment optimized to promote and accelerate protein folding. GroES binds to the apical surface of the GroEL ring, thereby capping the opening of the GroEL channel. This is Co-chaperonin GroES from Rickettsia conorii (strain ATCC VR-613 / Malish 7).